A 278-amino-acid polypeptide reads, in one-letter code: Ribosomal RNA small subunit methyltransferase A (278 aa).

Asn-27, Leu-29, Gly-54, Glu-75, Asp-95, and Asn-118 together coordinate S-adenosyl-L-methionine.

Belongs to the class I-like SAM-binding methyltransferase superfamily. rRNA adenine N(6)-methyltransferase family. RsmA subfamily.

Its subcellular location is the cytoplasm. The catalysed reaction is adenosine(1518)/adenosine(1519) in 16S rRNA + 4 S-adenosyl-L-methionine = N(6)-dimethyladenosine(1518)/N(6)-dimethyladenosine(1519) in 16S rRNA + 4 S-adenosyl-L-homocysteine + 4 H(+). Functionally, specifically dimethylates two adjacent adenosines (A1518 and A1519) in the loop of a conserved hairpin near the 3'-end of 16S rRNA in the 30S particle. May play a critical role in biogenesis of 30S subunits. This is Ribosomal RNA small subunit methyltransferase A from Chlamydia abortus (strain DSM 27085 / S26/3) (Chlamydophila abortus).